A 179-amino-acid chain; its full sequence is ATP synthase subunit delta (179 aa).

The protein belongs to the ATPase delta chain family. As to quaternary structure, F-type ATPases have 2 components, F(1) - the catalytic core - and F(0) - the membrane proton channel. F(1) has five subunits: alpha(3), beta(3), gamma(1), delta(1), epsilon(1). F(0) has three main subunits: a(1), b(2) and c(10-14). The alpha and beta chains form an alternating ring which encloses part of the gamma chain. F(1) is attached to F(0) by a central stalk formed by the gamma and epsilon chains, while a peripheral stalk is formed by the delta and b chains.

It localises to the cell membrane. Its function is as follows. F(1)F(0) ATP synthase produces ATP from ADP in the presence of a proton or sodium gradient. F-type ATPases consist of two structural domains, F(1) containing the extramembraneous catalytic core and F(0) containing the membrane proton channel, linked together by a central stalk and a peripheral stalk. During catalysis, ATP synthesis in the catalytic domain of F(1) is coupled via a rotary mechanism of the central stalk subunits to proton translocation. In terms of biological role, this protein is part of the stalk that links CF(0) to CF(1). It either transmits conformational changes from CF(0) to CF(1) or is implicated in proton conduction. This is ATP synthase subunit delta from Staphylococcus epidermidis (strain ATCC 35984 / DSM 28319 / BCRC 17069 / CCUG 31568 / BM 3577 / RP62A).